We begin with the raw amino-acid sequence, 307 residues long: Nucleotide-binding protein Achl_1824 (307 aa).

30–37 (GMSGAGRS) contributes to the ATP binding site. Residue 81 to 84 (DVRS) coordinates GTP.

It belongs to the RapZ-like family.

Displays ATPase and GTPase activities. This Pseudarthrobacter chlorophenolicus (strain ATCC 700700 / DSM 12829 / CIP 107037 / JCM 12360 / KCTC 9906 / NCIMB 13794 / A6) (Arthrobacter chlorophenolicus) protein is Nucleotide-binding protein Achl_1824.